Consider the following 282-residue polypeptide: NADPH-dependent 7-cyano-7-deazaguanine reductase (282 aa).

Residue 88-90 (IES) coordinates substrate. NADPH is bound at residue 90–91 (SK). Cys190 (thioimide intermediate) is an active-site residue. The Proton donor role is filled by Asp197. 229–230 (HE) provides a ligand contact to substrate. 258–259 (RG) provides a ligand contact to NADPH.

This sequence belongs to the GTP cyclohydrolase I family. QueF type 2 subfamily. In terms of assembly, homodimer.

The protein localises to the cytoplasm. It catalyses the reaction 7-aminomethyl-7-carbaguanine + 2 NADP(+) = 7-cyano-7-deazaguanine + 2 NADPH + 3 H(+). Its pathway is tRNA modification; tRNA-queuosine biosynthesis. In terms of biological role, catalyzes the NADPH-dependent reduction of 7-cyano-7-deazaguanine (preQ0) to 7-aminomethyl-7-deazaguanine (preQ1). The sequence is that of NADPH-dependent 7-cyano-7-deazaguanine reductase from Escherichia coli O139:H28 (strain E24377A / ETEC).